We begin with the raw amino-acid sequence, 482 residues long: Solute carrier family 49 member A3 (482 aa).

Transmembrane regions (helical) follow at residues 41 to 61 (WFVL…WISF), 81 to 101 (YLSL…SWLI), 109 to 129 (AIVF…GAIV), 150 to 170 (LCAI…SVWF), 181 to 201 (IASM…PSVV), 206 to 226 (YIAH…ILAT), 264 to 284 (VILM…SSFL), 296 to 316 (LFAG…AFVC), 330 to 350 (VKTC…VINF), 355 to 375 (VLVA…SPVG), 390 to 410 (SSTG…MILF), and 437 to 457 (TSML…IIFF).

The protein belongs to the major facilitator superfamily.

Its subcellular location is the membrane. The protein is Solute carrier family 49 member A3 (slc49a3) of Xenopus tropicalis (Western clawed frog).